Reading from the N-terminus, the 1004-residue chain is Glutamate [NMDA] receptor subunit 1 (1004 aa).

The N-terminal stretch at 1–39 (MAGTDSPAAARFVYRCLLFAPAIVVGLLLPLTLPPIAAA) is a signal peptide. Over 40–585 (QRHTASDNPS…TLVSFLQPFS (546 aa)) the chain is Extracellular. N-linked (GlcNAc...) asparagine glycosylation is found at N270, N326, N357, N409, N466, N493, and N513. Glycine is bound by residues 542–544 (PLT) and R549. A helical membrane pass occupies residues 586-606 (NTLWILVMVSVHVVALVLYLL). Topologically, residues 607–663 (DRFSPFGRFKLSHSDSNEEKALNLSSAVWFAWGVLLNSGIGEGTPRSFSARVLGMVW) are cytoplasmic. A helical transmembrane segment spans residues 664–684 (AGFAMIIVASYTANLAAFLVL). The Extracellular portion of the chain corresponds to 685-843 (ERPKTKLSGI…KTPNTLGLKN (159 aa)). A glycan (N-linked (GlcNAc...) asparagine) is linked at N705. Glycine-binding residues include S715 and D759. The helical transmembrane segment at 844 to 864 (MAGVFILVGVGIAGGVGLIII) threads the bilayer. The Cytoplasmic portion of the chain corresponds to 865 to 1004 (EVIYKKHQVK…YTSDVSHLVV (140 aa)). Positions 980 to 1004 (TRPQQNILPPRYSPGYTSDVSHLVV) are disordered. Polar residues predominate over residues 994–1004 (GYTSDVSHLVV).

This sequence belongs to the glutamate-gated ion channel (TC 1.A.10.1) family. Forms a heteromeric NMDA channel with Nmdar2.

It localises to the cell membrane. The protein resides in the postsynaptic cell membrane. Its subcellular location is the postsynaptic density. Its function is as follows. NMDA receptor subtype of glutamate-gated ion channels with high calcium permeability and voltage-dependent sensitivity to magnesium. Mediated by glycine. This protein plays a key role in synaptic plasticity, synaptogenesis, excitotoxicity, memory acquisition and learning. It mediates neuronal functions in glutamate neurotransmission. Is involved in the cell surface targeting of NMDA receptors. Plays a role in associative learning and in long-term memory consolidation. The chain is Glutamate [NMDA] receptor subunit 1 from Drosophila pseudoobscura pseudoobscura (Fruit fly).